The following is a 2203-amino-acid chain: Genome polyprotein (2203 aa).

Residue Gly2 is the site of N-myristoyl glycine; by host attachment. The Cytoplasmic portion of the chain corresponds to 2-1513; it reads GAQVSTQKTG…HVSRAFICLQ (1512 aa). The segment at 567–583 is amphipathic alpha-helix; that stretch reads ELQNDVRQAVEGAIGRV. Catalysis depends on for protease 2A activity residues His890 and Asp908. Zn(2+)-binding residues include Cys925 and Cys927. Catalysis depends on Cys979, which acts as the For protease 2A activity. Positions 985 and 987 each coordinate Zn(2+). The tract at residues 1119–1191 is membrane-binding; the sequence is SNGWLKKFTE…EQSAPSQSDQ (73 aa). An oligomerization region spans residues 1119–1257; sequence SNGWLKKFTE…SPGAGKSVAT (139 aa). The tract at residues 1140-1144 is RNA-binding; it reads AVKIQ. Residues 1223–1379 form the SF3 helicase domain; sequence EKKMSNYIQF…SMYSQNGKIN (157 aa). Zn(2+) is bound by residues Cys1387, Cys1399, and Cys1404. A C4-type; degenerate zinc finger spans residues 1387-1404; sequence CDEECCPVNFKRCCPLVC. Positions 1431–1438 are RNA-binding; sequence EYNHRHSV. The interval 1442–1447 is oligomerization; sequence LEALFQ. Residues 1514 to 1529 lie within the membrane without spanning it; it reads ALTTFVSVAGIIYIIY. Residues 1530–2203 are Cytoplasmic-facing; sequence KLFAGFQGAY…TLRRKWLDSF (674 aa). Tyr1539 is modified (O-(5'-phospho-RNA)-tyrosine). Residues 1559–1737 form the Peptidase C3 domain; it reads GPAFEFAVAM…FSAALLRHYF (179 aa). Active-site for protease 3C activity residues include His1598, Glu1629, and Cys1705. Positions 1968-2084 constitute a RdRp catalytic domain; that stretch reads GHLIAFDYSG…SYPWPIDASL (117 aa). Mg(2+)-binding residues include Asp1974 and Asp2070.

Belongs to the picornaviruses polyprotein family. As to quaternary structure, interacts with capsid protein VP1 and capsid protein VP3 to form heterotrimeric protomers. Interacts with capsid protein VP0, and capsid protein VP3 to form heterotrimeric protomers. Five protomers subsequently associate to form pentamers which serve as building blocks for the capsid. Interacts with capsid protein VP2, capsid protein VP3 and capsid protein VP4 following cleavage of capsid protein VP0. In terms of assembly, interacts with capsid protein VP1 and capsid protein VP3 in the mature capsid. As to quaternary structure, interacts with capsid protein VP0 and capsid protein VP1 to form heterotrimeric protomers. Five protomers subsequently associate to form pentamers which serve as building blocks for the capsid. Interacts with capsid protein VP4 in the mature capsid. Interacts with protein 2C; this interaction may be important for virion morphogenesis. Interacts with capsid protein VP1 and capsid protein VP3. In terms of assembly, homodimer. As to quaternary structure, homohexamer; forms a hexameric ring structure with 6-fold symmetry characteristic of AAA+ ATPases. Interacts (via N-terminus) with host RTN3 (via reticulon domain); this interaction is important for viral replication. Interacts with capsid protein VP3; this interaction may be important for virion morphogenesis. Interacts with protein 3CD. In terms of assembly, homodimer. Interacts with host GBF1. Interacts (via GOLD domain) with host ACBD3 (via GOLD domain); this interaction allows the formation of a viral protein 3A/ACBD3 heterotetramer with a 2:2 stoichiometry, which will stimulate the recruitment of host PI4KB in order to synthesize PI4P at the viral RNA replication sites. As to quaternary structure, interacts with RNA-directed RNA polymerase. Interacts with protein 3AB and with RNA-directed RNA polymerase. In terms of assembly, interacts with Viral protein genome-linked and with protein 3CD. The cofactor is Mg(2+). Specific enzymatic cleavages in vivo by the viral proteases yield processing intermediates and the mature proteins. Post-translationally, myristoylation is required for the formation of pentamers during virus assembly. Further assembly of 12 pentamers and a molecule of genomic RNA generates the provirion. In terms of processing, during virion maturation, immature virions are rendered infectious following cleavage of VP0 into VP4 and VP2. This maturation seems to be an autocatalytic event triggered by the presence of RNA in the capsid and it is followed by a conformational change infectious virion. Myristoylation is required during RNA encapsidation and formation of the mature virus particle. Post-translationally, VPg is uridylylated by the polymerase into VPg-pUpU. This acts as a nucleotide-peptide primer for the genomic RNA replication.

The protein localises to the virion. It localises to the host cytoplasm. Its subcellular location is the host cytoplasmic vesicle membrane. The protein resides in the host nucleus. It carries out the reaction a ribonucleoside 5'-triphosphate + H2O = a ribonucleoside 5'-diphosphate + phosphate + H(+). It catalyses the reaction Selective cleavage of Tyr-|-Gly bond in the picornavirus polyprotein.. The catalysed reaction is RNA(n) + a ribonucleoside 5'-triphosphate = RNA(n+1) + diphosphate. The enzyme catalyses Selective cleavage of Gln-|-Gly bond in the poliovirus polyprotein. In other picornavirus reactions Glu may be substituted for Gln, and Ser or Thr for Gly.. Replication or transcription is subject to high level of random mutations by the nucleotide analog ribavirin. Its function is as follows. Forms an icosahedral capsid of pseudo T=3 symmetry with capsid proteins VP2 and VP3. The capsid is 300 Angstroms in diameter, composed of 60 copies of each capsid protein and enclosing the viral positive strand RNA genome. Capsid protein VP1 mainly forms the vertices of the capsid. Capsid protein VP1 interacts with host cell receptor to provide virion attachment to target host cells. This attachment induces virion internalization. Tyrosine kinases are probably involved in the entry process. After binding to its receptor, the capsid undergoes conformational changes. Capsid protein VP1 N-terminus (that contains an amphipathic alpha-helix) and capsid protein VP4 are externalized. Together, they shape a pore in the host membrane through which viral genome is translocated to host cell cytoplasm. Forms an icosahedral capsid of pseudo T=3 symmetry with capsid proteins VP2 and VP3. The capsid is 300 Angstroms in diameter, composed of 60 copies of each capsid protein and enclosing the viral positive strand RNA genome. In terms of biological role, lies on the inner surface of the capsid shell. After binding to the host receptor, the capsid undergoes conformational changes. Capsid protein VP4 is released, Capsid protein VP1 N-terminus is externalized, and together, they shape a pore in the host membrane through which the viral genome is translocated into the host cell cytoplasm. Functionally, component of immature procapsids, which is cleaved into capsid proteins VP4 and VP2 after maturation. Allows the capsid to remain inactive before the maturation step. Its function is as follows. Cysteine protease that cleaves viral polyprotein and specific host proteins. It is responsible for the autocatalytic cleavage between the P1 and P2 regions, which is the first cleavage occurring in the polyprotein. Also cleaves the host translation initiation factor EIF4G1, in order to shut down the capped cellular mRNA translation. Inhibits the host nucleus-cytoplasm protein and RNA trafficking by cleaving host members of the nuclear pores. Counteracts stress granule formation probably by antagonizing its assembly or promoting its dissassembly. Plays an essential role in the virus replication cycle by acting as a viroporin. Creates a pore in the host endoplasmic reticulum and as a consequence releases Ca2+ in the cytoplasm of infected cell. In turn, high levels of cytoplasmic calcium may trigger membrane trafficking and transport of viral ER-associated proteins to viroplasms, sites of viral genome replication. In terms of biological role, induces and associates with structural rearrangements of intracellular membranes. Displays RNA-binding, nucleotide binding and NTPase activities. May play a role in virion morphogenesis and viral RNA encapsidation by interacting with the capsid protein VP3. Functionally, localizes the viral replication complex to the surface of membranous vesicles. Together with protein 3CD binds the Cis-Active RNA Element (CRE) which is involved in RNA synthesis initiation. Acts as a cofactor to stimulate the activity of 3D polymerase, maybe through a nucleid acid chaperone activity. Its function is as follows. Localizes the viral replication complex to the surface of membranous vesicles. It inhibits host cell endoplasmic reticulum-to-Golgi apparatus transport and causes the disassembly of the Golgi complex, possibly through GBF1 interaction. This would result in depletion of MHC, trail receptors and IFN receptors at the host cell surface. Plays an essential role in viral RNA replication by recruiting ACBD3 and PI4KB at the viral replication sites, thereby allowing the formation of the rearranged membranous structures where viral replication takes place. Acts as a primer for viral RNA replication and remains covalently bound to viral genomic RNA. VPg is uridylylated prior to priming replication into VPg-pUpU. The oriI viral genomic sequence may act as a template for this. The VPg-pUpU is then used as primer on the genomic RNA poly(A) by the RNA-dependent RNA polymerase to replicate the viral genome. During genome replication, the VPg-RNA linkage is removed by the host TDP2, thereby accelerating replication. During the late stage of the replication cycle, host TDP2 is excluded from sites of viral RNA synthesis and encapsidation, allowing for the generation of progeny virions. In terms of biological role, involved in the viral replication complex and viral polypeptide maturation. It exhibits protease activity with a specificity and catalytic efficiency that is different from protease 3C. Protein 3CD lacks polymerase activity. Protein 3CD binds to the 5'UTR of the viral genome. Functionally, replicates the viral genomic RNA on the surface of intracellular membranes. May form linear arrays of subunits that propagate along a strong head-to-tail interaction called interface-I. Covalently attaches UMP to a tyrosine of VPg, which is used to prime RNA synthesis. The positive stranded RNA genome is first replicated at virus induced membranous vesicles, creating a dsRNA genomic replication form. This dsRNA is then used as template to synthesize positive stranded RNA genomes. ss(+)RNA genomes are either translated, replicated or encapsidated. Its function is as follows. Major viral protease that mediates proteolytic processing of the polyprotein. Cleaves host EIF5B, contributing to host translation shutoff. Also cleaves host PABPC1, contributing to host translation shutoff. Cleaves host NLRP1, triggers host N-glycine-mediated degradation of the autoinhibitory NLRP1 N-terminal fragment. This is Genome polyprotein from Echovirus 9 (strain Barty).